A 143-amino-acid chain; its full sequence is Small ribosomal subunit protein eS12 (143 aa).

It belongs to the eukaryotic ribosomal protein eS12 family.

This Hordeum vulgare (Barley) protein is Small ribosomal subunit protein eS12 (RPS12).